A 456-amino-acid chain; its full sequence is Glutamate--tRNA ligase 2 (456 aa).

Residues 8–18 (PSPTGYIHIGN) carry the 'HIGH' region motif. Positions 249–253 (GLSKR) match the 'KMSKS' region motif. Residue lysine 252 coordinates ATP.

Belongs to the class-I aminoacyl-tRNA synthetase family. Glutamate--tRNA ligase type 1 subfamily. Monomer.

It localises to the cytoplasm. It carries out the reaction tRNA(Glu) + L-glutamate + ATP = L-glutamyl-tRNA(Glu) + AMP + diphosphate. In terms of biological role, catalyzes the attachment of glutamate to tRNA(Glu) in a two-step reaction: glutamate is first activated by ATP to form Glu-AMP and then transferred to the acceptor end of tRNA(Glu). This chain is Glutamate--tRNA ligase 2, found in Bartonella bacilliformis (strain ATCC 35685 / KC583 / Herrer 020/F12,63).